A 195-amino-acid polypeptide reads, in one-letter code: Thymidine kinase (195 aa).

ATP contacts are provided by residues 15-22 and 88-91; these read GSMFSGKS and DEVQ. The active-site Proton acceptor is the Glu89. Phe120 is a binding site for substrate. Cys145 and Cys148 together coordinate Zn(2+). Residues 170–174 and Tyr179 contribute to the substrate site; that span reads IILVG. Positions 183 and 186 each coordinate Zn(2+).

Belongs to the thymidine kinase family. Homotetramer.

The protein resides in the cytoplasm. The catalysed reaction is thymidine + ATP = dTMP + ADP + H(+). The protein is Thymidine kinase of Bacillus cereus (strain ATCC 14579 / DSM 31 / CCUG 7414 / JCM 2152 / NBRC 15305 / NCIMB 9373 / NCTC 2599 / NRRL B-3711).